The following is a 307-amino-acid chain: Recombination-associated protein RdgC (307 aa).

Belongs to the RdgC family.

It is found in the cytoplasm. The protein resides in the nucleoid. In terms of biological role, may be involved in recombination. This Burkholderia orbicola (strain MC0-3) protein is Recombination-associated protein RdgC.